Reading from the N-terminus, the 144-residue chain is Large ribosomal subunit protein uL15 (144 aa).

A disordered region spans residues methionine 1–glycine 52. A compositionally biased stretch (gly residues) spans arginine 21–glycine 31.

Belongs to the universal ribosomal protein uL15 family. Part of the 50S ribosomal subunit.

In terms of biological role, binds to the 23S rRNA. The protein is Large ribosomal subunit protein uL15 of Haemophilus ducreyi (strain 35000HP / ATCC 700724).